The sequence spans 215 residues: Cytochrome b6 (215 aa).

The chain crosses the membrane as a helical span at residues isoleucine 32–phenylalanine 52. Cysteine 35 contributes to the heme c binding site. Histidine 86 and histidine 100 together coordinate heme b. Helical transmembrane passes span alanine 90–phenylalanine 110, leucine 116–tyrosine 136, and alanine 186–isoleucine 206. Heme b-binding residues include histidine 187 and histidine 202.

It belongs to the cytochrome b family. PetB subfamily. In terms of assembly, the 4 large subunits of the cytochrome b6-f complex are cytochrome b6, subunit IV (17 kDa polypeptide, PetD), cytochrome f and the Rieske protein, while the 4 small subunits are PetG, PetL, PetM and PetN. The complex functions as a dimer. Heme b serves as cofactor. The cofactor is heme c.

It localises to the plastid. The protein localises to the chloroplast thylakoid membrane. Component of the cytochrome b6-f complex, which mediates electron transfer between photosystem II (PSII) and photosystem I (PSI), cyclic electron flow around PSI, and state transitions. The sequence is that of Cytochrome b6 from Phaeodactylum tricornutum (strain CCAP 1055/1).